The sequence spans 130 residues: Small ribosomal subunit protein uS8B (130 aa).

The protein belongs to the universal ribosomal protein uS8 family. As to quaternary structure, component of the small ribosomal subunit (SSU). Mature yeast ribosomes consist of a small (40S) and a large (60S) subunit. The 40S small subunit contains 1 molecule of ribosomal RNA (18S rRNA) and 33 different proteins (encoded by 57 genes). The large 60S subunit contains 3 rRNA molecules (25S, 5.8S and 5S rRNA) and 46 different proteins (encoded by 81 genes).

The protein localises to the cytoplasm. Its function is as follows. Component of the ribosome, a large ribonucleoprotein complex responsible for the synthesis of proteins in the cell. The small ribosomal subunit (SSU) binds messenger RNAs (mRNAs) and translates the encoded message by selecting cognate aminoacyl-transfer RNA (tRNA) molecules. The large subunit (LSU) contains the ribosomal catalytic site termed the peptidyl transferase center (PTC), which catalyzes the formation of peptide bonds, thereby polymerizing the amino acids delivered by tRNAs into a polypeptide chain. The nascent polypeptides leave the ribosome through a tunnel in the LSU and interact with protein factors that function in enzymatic processing, targeting, and the membrane insertion of nascent chains at the exit of the ribosomal tunnel. This Saccharomyces cerevisiae (strain ATCC 204508 / S288c) (Baker's yeast) protein is Small ribosomal subunit protein uS8B.